The primary structure comprises 391 residues: Carbamoyl phosphate synthase small chain (391 aa).

The interval 1–189 (MIKSALLVLE…DLPAAKQPED (189 aa)) is CPSase. Residues Ser47, Gly241, and Gly243 each coordinate L-glutamine. One can recognise a Glutamine amidotransferase type-1 domain in the interval 193-380 (HVVAYDYGVK…IELIEAYRAS (188 aa)). The active-site Nucleophile is Cys269. 5 residues coordinate L-glutamine: Leu270, Gln273, Asn311, Gly313, and Phe314. Active-site residues include His353 and Glu355.

This sequence belongs to the CarA family. In terms of assembly, composed of two chains; the small (or glutamine) chain promotes the hydrolysis of glutamine to ammonia, which is used by the large (or ammonia) chain to synthesize carbamoyl phosphate. Tetramer of heterodimers (alpha,beta)4.

The catalysed reaction is hydrogencarbonate + L-glutamine + 2 ATP + H2O = carbamoyl phosphate + L-glutamate + 2 ADP + phosphate + 2 H(+). The enzyme catalyses L-glutamine + H2O = L-glutamate + NH4(+). It participates in amino-acid biosynthesis; L-arginine biosynthesis; carbamoyl phosphate from bicarbonate: step 1/1. It functions in the pathway pyrimidine metabolism; UMP biosynthesis via de novo pathway; (S)-dihydroorotate from bicarbonate: step 1/3. Small subunit of the glutamine-dependent carbamoyl phosphate synthetase (CPSase). CPSase catalyzes the formation of carbamoyl phosphate from the ammonia moiety of glutamine, carbonate, and phosphate donated by ATP, constituting the first step of 2 biosynthetic pathways, one leading to arginine and/or urea and the other to pyrimidine nucleotides. The small subunit (glutamine amidotransferase) binds and cleaves glutamine to supply the large subunit with the substrate ammonia. The protein is Carbamoyl phosphate synthase small chain of Yersinia pestis.